The chain runs to 476 residues: ATP sulfurylase 2 (476 aa).

Residues 1-56 (MSLMIRSSYVSHITLFQPRNSKPSSFTNQISFLSSSNNNPFLNLVYKRNLTMQSVS) constitute a chloroplast transit peptide.

This sequence belongs to the sulfate adenylyltransferase family. Homotetramer. Mostly expressed in leaves or cotyledons.

The protein resides in the plastid. It is found in the chloroplast. It localises to the cytoplasm. It carries out the reaction sulfate + ATP + H(+) = adenosine 5'-phosphosulfate + diphosphate. It functions in the pathway sulfur metabolism; hydrogen sulfide biosynthesis; sulfite from sulfate: step 1/3. This Arabidopsis thaliana (Mouse-ear cress) protein is ATP sulfurylase 2 (APS2).